The following is a 348-amino-acid chain: D-alanine--D-alanine ligase (348 aa).

The ATP-grasp domain occupies 132–334 (KRVLESIGIP…YPDLIEELVT (203 aa)). 162 to 217 (LARLTFPIFVKPANMGSSVGISKAQTKVELRKAIQLALTYDSRVLIEQGVVAREIE) contacts ATP. Residues D288, E301, and N303 each contribute to the Mg(2+) site.

It belongs to the D-alanine--D-alanine ligase family. Mg(2+) serves as cofactor. Mn(2+) is required as a cofactor.

The protein resides in the cytoplasm. It carries out the reaction 2 D-alanine + ATP = D-alanyl-D-alanine + ADP + phosphate + H(+). It participates in cell wall biogenesis; peptidoglycan biosynthesis. In terms of biological role, cell wall formation. The protein is D-alanine--D-alanine ligase of Streptococcus pyogenes serotype M18 (strain MGAS8232).